The primary structure comprises 633 residues: 1-deoxy-D-xylulose-5-phosphate synthase (633 aa).

Residues histidine 74 and 115 to 117 (GHA) each bind thiamine diphosphate. Aspartate 146 provides a ligand contact to Mg(2+). Thiamine diphosphate-binding positions include 147 to 148 (GA), asparagine 175, tyrosine 286, and glutamate 363. Residue asparagine 175 coordinates Mg(2+).

The protein belongs to the transketolase family. DXPS subfamily. Homodimer. Mg(2+) serves as cofactor. It depends on thiamine diphosphate as a cofactor.

It catalyses the reaction D-glyceraldehyde 3-phosphate + pyruvate + H(+) = 1-deoxy-D-xylulose 5-phosphate + CO2. Its pathway is metabolic intermediate biosynthesis; 1-deoxy-D-xylulose 5-phosphate biosynthesis; 1-deoxy-D-xylulose 5-phosphate from D-glyceraldehyde 3-phosphate and pyruvate: step 1/1. In terms of biological role, catalyzes the acyloin condensation reaction between C atoms 2 and 3 of pyruvate and glyceraldehyde 3-phosphate to yield 1-deoxy-D-xylulose-5-phosphate (DXP). The chain is 1-deoxy-D-xylulose-5-phosphate synthase from Dehalococcoides mccartyi (strain ATCC BAA-2100 / JCM 16839 / KCTC 5957 / BAV1).